The following is a 121-amino-acid chain: Small ribosomal subunit protein bS6 (121 aa).

Residues 102–121 (MMRNVEREEARKAQQQEYAA) are disordered. Residues 105 to 115 (NVEREEARKAQ) show a composition bias toward basic and acidic residues.

It belongs to the bacterial ribosomal protein bS6 family.

Its function is as follows. Binds together with bS18 to 16S ribosomal RNA. In Polaromonas sp. (strain JS666 / ATCC BAA-500), this protein is Small ribosomal subunit protein bS6.